We begin with the raw amino-acid sequence, 124 residues long: Testis-expressed protein 54 (124 aa).

The span at 1–10 (MGCCQDKDFE) shows a compositional bias: basic and acidic residues. 2 disordered regions span residues 1–77 (MGCC…SNES) and 90–124 (FGRR…PEKG). A compositionally biased stretch (acidic residues) spans 11–30 (MSDEQSKEEESEDGREDETT). Composition is skewed to basic and acidic residues over residues 34–50 (RGPR…RGEL) and 101–124 (RQPD…PEKG).

As to expression, expressed in Testis.

This chain is Testis-expressed protein 54, found in Homo sapiens (Human).